The primary structure comprises 26 residues: Mitochondrial import receptor subunit TOM7-2 (26 aa).

The protein belongs to the Tom7 family. Forms part of the preprotein translocase complex of the outer mitochondrial membrane (TOM complex).

Its subcellular location is the mitochondrion outer membrane. Seems to act as a modulator of the dynamics of the mitochondrial protein transport machinery. Seems to promote the dissociation of subunits of the outer membrane translocase. In Solanum tuberosum (Potato), this protein is Mitochondrial import receptor subunit TOM7-2 (TOM7-2).